Consider the following 60-residue polypeptide: MDPCECSKTGKCNCGTSCTCTNCSCKCCKKSCCSCCPSGCSKCASGCVCKGNSCDKSCCQ.

The tract at residues 1 to 28 is beta; that stretch reads MDPCECSKTGKCNCGTSCTCTNCSCKCC. A divalent metal cation contacts are provided by cysteine 4, cysteine 6, cysteine 12, cysteine 14, cysteine 18, cysteine 20, cysteine 23, cysteine 25, cysteine 28, cysteine 32, cysteine 33, cysteine 35, cysteine 36, cysteine 40, cysteine 43, cysteine 47, cysteine 49, cysteine 54, cysteine 58, and cysteine 59. Residues 29–60 form an alpha region; the sequence is KKSCCSCCPSGCSKCASGCVCKGNSCDKSCCQ.

It belongs to the metallothionein superfamily. Type 1 family.

Functionally, metallothioneins have a high content of cysteine residues that bind various heavy metals. This chain is Metallothionein A (mta), found in Cyprinodon sp. (Pupfish).